Consider the following 69-residue polypeptide: uncharacterized protein (69 aa).

The Cytoplasmic segment spans residues 1-15 (MLLYIVIIVACIISK). The chain crosses the membrane as a helical span at residues 16 to 36 (LVPNEYWAIHLFFIIMIFMVY). Residues 37–69 (MYEKLDIHQKYQFWNYTMSGLSGHNVQVICKCY) lie on the Extracellular side of the membrane. N-linked (GlcNAc...) asparagine; by host glycosylation occurs at Asn-51.

The protein belongs to the asfivirus X69R family.

The protein resides in the host membrane. This is an uncharacterized protein from Ornithodoros (relapsing fever ticks).